The primary structure comprises 312 residues: tRNA uridine(34) hydroxylase (312 aa).

The Rhodanese domain occupies R130 to L225. C185 serves as the catalytic Cysteine persulfide intermediate.

It belongs to the TrhO family.

It catalyses the reaction uridine(34) in tRNA + AH2 + O2 = 5-hydroxyuridine(34) in tRNA + A + H2O. In terms of biological role, catalyzes oxygen-dependent 5-hydroxyuridine (ho5U) modification at position 34 in tRNAs. This chain is tRNA uridine(34) hydroxylase, found in Corynebacterium diphtheriae (strain ATCC 700971 / NCTC 13129 / Biotype gravis).